Here is a 676-residue protein sequence, read N- to C-terminus: A-type ATP synthase subunit I (676 aa).

A run of 8 helical transmembrane segments spans residues 341–361 (VFIAIFFPIFFGMMLGDIGYG), 390–410 (AGVMSIIFGFIYGECFGPFIV), 449–469 (ILLFATIVIGIAKILFGFALG), 490–510 (IIGVLGLAMIIFGFAYNVGVF), 538–558 (LNVYYLAALPLLVVWFILFVM), 564–584 (MGAMGVILAVELLTWFGQIMS), 590–610 (AIGLSSVYIAFVINFIGMKLI), and 617–637 (IPIVGAIVLLIGHVGNLILGI).

This sequence belongs to the V-ATPase 116 kDa subunit family. Has multiple subunits with at least A(3), B(3), C, D, E, F, H, I and proteolipid K(x).

Its subcellular location is the cell membrane. Functionally, component of the A-type ATP synthase that produces ATP from ADP in the presence of a proton gradient across the membrane. The chain is A-type ATP synthase subunit I from Archaeoglobus fulgidus (strain ATCC 49558 / DSM 4304 / JCM 9628 / NBRC 100126 / VC-16).